The primary structure comprises 696 residues: Elongation factor G (696 aa).

The 275-residue stretch at 8-282 (KDYRNIGIMA…AVVDYLPSPL (275 aa)) folds into the tr-type G domain. Residues 17-24 (AHIDAGKT), 81-85 (DTPGH), and 135-138 (NKMD) each bind GTP.

The protein belongs to the TRAFAC class translation factor GTPase superfamily. Classic translation factor GTPase family. EF-G/EF-2 subfamily.

The protein localises to the cytoplasm. In terms of biological role, catalyzes the GTP-dependent ribosomal translocation step during translation elongation. During this step, the ribosome changes from the pre-translocational (PRE) to the post-translocational (POST) state as the newly formed A-site-bound peptidyl-tRNA and P-site-bound deacylated tRNA move to the P and E sites, respectively. Catalyzes the coordinated movement of the two tRNA molecules, the mRNA and conformational changes in the ribosome. This is Elongation factor G from Mycoplasmopsis synoviae (strain 53) (Mycoplasma synoviae).